We begin with the raw amino-acid sequence, 177 residues long: Interleukin-25 (177 aa).

A signal peptide spans 1 to 32; it reads MRERPRLGEDSSLISLFLQVVAFLAMVMGTHT. A disordered region spans residues 58 to 81; that stretch reads PVPPLEPARPNRHPESCRASEDGP. The segment covering 69–78 has biased composition (basic and acidic residues); the sequence is RHPESCRASE. Disulfide bonds link C110-C168 and C115-C170. The N-linked (GlcNAc...) asparagine glycan is linked to N136.

Belongs to the IL-17 family. As to expression, expressed at low levels in several tissues, including brain, kidney, lung, prostate, testis, spinal cord, adrenal gland, and trachea.

Its subcellular location is the secreted. Its function is as follows. Cytokine produced by various cells such as eosinophils, T-helper type 2 (Th2) cells or epithelial cells that plays a role in internal safety of adaptive immune responses by regulating cytokine production. Promotes and augments T-helper type 2 responses locally or systemically. Exerts its activity via its receptor composed of IL17RA and IL17RB for signal transduction. In turn, stimulates the JAK2-STAT5A pathway and promotes the secretion of type-2 associated cytokines including IL4, IL9 and IL13. Also induces the release of IL8, and IL6 from eosinophils through the combined activation of MAPK and NF-kappa-B pathways. Inhibits the differentiation of T-helper (Th17) cells via the production of IL4, IL5 and IL13. The chain is Interleukin-25 (IL25) from Homo sapiens (Human).